The sequence spans 448 residues: Solute carrier family 52, riboflavin transporter, member 2 (448 aa).

The next 5 helical transmembrane spans lie at 14–34, 47–67, 79–99, 105–125, and 147–167; these read LLVA…WVEL, LPSY…VVTL, VPIQ…APLW, VAGQ…ALAC, and FFLG…VQGV. N-linked (GlcNAc...) asparagine glycosylation is present at N178. A helical transmembrane segment spans residues 198–218; the sequence is WALTALLVTSAAAFQGLLLLL. The disordered stretch occupies residues 228 to 267; it reads GAGPELPLGSPGAEEEEKEEEEALPLQEPPSQAAGTIPGP. The span at 240–250 shows a compositional bias: acidic residues; that stretch reads AEEEEKEEEEA. 5 helical membrane-spanning segments follow: residues 280-300, 315-335, 342-362, 369-389, and 407-427; these read AFLL…LPAV, LAVV…MGVL, LVGL…LAIL, VGTT…LCVF, and ALLA…GTMF.

It belongs to the riboflavin transporter family.

The protein resides in the cell membrane. The enzyme catalyses riboflavin(in) = riboflavin(out). With respect to regulation, riboflavin transport is Na(+)-independent but moderately pH-sensitive. Activity is strongly inhibited by riboflavin analogs, such as lumiflavin. Weakly inhibited by flavin adenine dinucleotide (FAD) and flavin mononucleotide (FMN). In terms of biological role, plasma membrane transporter mediating the uptake by cells of the water soluble vitamin B2/riboflavin that plays a key role in biochemical oxidation-reduction reactions of the carbohydrate, lipid, and amino acid metabolism. May also act as a receptor for 4-hydroxybutyrate. Functionally, (Microbial infection) In case of infection by retroviruses, acts as a cell receptor to retroviral envelopes similar to the porcine endogenous retrovirus (PERV-A). The sequence is that of Solute carrier family 52, riboflavin transporter, member 2 (SLC52A2) from Papio hamadryas (Hamadryas baboon).